Reading from the N-terminus, the 250-residue chain is Phosphate import ATP-binding protein PstB (250 aa).

An ABC transporter domain is found at 4-245 (LTARDLKLSF…PRHELTEKYV (242 aa)). 36–43 (GPSGSGKS) provides a ligand contact to ATP.

The protein belongs to the ABC transporter superfamily. Phosphate importer (TC 3.A.1.7) family. In terms of assembly, the complex is composed of two ATP-binding proteins (PstB), two transmembrane proteins (PstC and PstA) and a solute-binding protein (PstS).

It is found in the cell membrane. It carries out the reaction phosphate(out) + ATP + H2O = ADP + 2 phosphate(in) + H(+). Functionally, part of the ABC transporter complex PstSACB involved in phosphate import. Responsible for energy coupling to the transport system. The polypeptide is Phosphate import ATP-binding protein PstB (Pyrobaculum aerophilum (strain ATCC 51768 / DSM 7523 / JCM 9630 / CIP 104966 / NBRC 100827 / IM2)).